The chain runs to 920 residues: Translation initiation factor IF-2 (920 aa).

The tract at residues 33 to 305 is disordered; that stretch reads KSASSTVEAP…RGRKSKRAKR (273 aa). Low complexity predominate over residues 53–86; it reads SKSAPAPAKSAGNGATAAPATSATPATAAAAAAP. Pro residues-rich tracts occupy residues 87–159, 179–193, and 201–212; these read APAP…PAPR, PRPQ…PGTP, and NMPPRPAGPRPG. Positions 225-291 are enriched in gly residues; sequence PGGRGPGGGG…GAAGAFGRPG (67 aa). Positions 295–304 are enriched in basic residues; it reads KRGRKSKRAK. The tr-type G domain maps to 416 to 588; it reads IRPPVVTVMG…VLLTADASLD (173 aa). Residues 425 to 432 form a G1 region; that stretch reads GHVDHGKT. 425 to 432 contributes to the GTP binding site; that stretch reads GHVDHGKT. Residues 450–454 are G2; the sequence is GITQH. The G3 stretch occupies residues 475-478; the sequence is DTPG. Residues 475 to 479 and 529 to 532 each bind GTP; these read DTPGH and NKID. A G4 region spans residues 529–532; that stretch reads NKID. The interval 565–567 is G5; it reads SAK.

Belongs to the TRAFAC class translation factor GTPase superfamily. Classic translation factor GTPase family. IF-2 subfamily.

It localises to the cytoplasm. One of the essential components for the initiation of protein synthesis. Protects formylmethionyl-tRNA from spontaneous hydrolysis and promotes its binding to the 30S ribosomal subunits. Also involved in the hydrolysis of GTP during the formation of the 70S ribosomal complex. The sequence is that of Translation initiation factor IF-2 from Mycobacterium sp. (strain JLS).